A 456-amino-acid polypeptide reads, in one-letter code: Bifunctional protein GlmU (456 aa).

Residues M1–R227 are pyrophosphorylase. Residues L8–G11, K22, Q73, G78–T79, Y100–D102, G137, E152, N167, and N225 contribute to the UDP-N-acetyl-alpha-D-glucosamine site. A Mg(2+)-binding site is contributed by D102. Residue N225 coordinates Mg(2+). The linker stretch occupies residues Q228 to Q248. The tract at residues G249–T456 is N-acetyltransferase. UDP-N-acetyl-alpha-D-glucosamine contacts are provided by R331 and K349. H361 (proton acceptor) is an active-site residue. UDP-N-acetyl-alpha-D-glucosamine is bound by residues Y364 and N375. Acetyl-CoA contacts are provided by residues A378, N384–Y385, S403, A421, and R438.

The protein in the N-terminal section; belongs to the N-acetylglucosamine-1-phosphate uridyltransferase family. This sequence in the C-terminal section; belongs to the transferase hexapeptide repeat family. As to quaternary structure, homotrimer. Mg(2+) serves as cofactor.

Its subcellular location is the cytoplasm. The catalysed reaction is alpha-D-glucosamine 1-phosphate + acetyl-CoA = N-acetyl-alpha-D-glucosamine 1-phosphate + CoA + H(+). The enzyme catalyses N-acetyl-alpha-D-glucosamine 1-phosphate + UTP + H(+) = UDP-N-acetyl-alpha-D-glucosamine + diphosphate. Its pathway is nucleotide-sugar biosynthesis; UDP-N-acetyl-alpha-D-glucosamine biosynthesis; N-acetyl-alpha-D-glucosamine 1-phosphate from alpha-D-glucosamine 6-phosphate (route II): step 2/2. It functions in the pathway nucleotide-sugar biosynthesis; UDP-N-acetyl-alpha-D-glucosamine biosynthesis; UDP-N-acetyl-alpha-D-glucosamine from N-acetyl-alpha-D-glucosamine 1-phosphate: step 1/1. The protein operates within bacterial outer membrane biogenesis; LPS lipid A biosynthesis. Functionally, catalyzes the last two sequential reactions in the de novo biosynthetic pathway for UDP-N-acetylglucosamine (UDP-GlcNAc). The C-terminal domain catalyzes the transfer of acetyl group from acetyl coenzyme A to glucosamine-1-phosphate (GlcN-1-P) to produce N-acetylglucosamine-1-phosphate (GlcNAc-1-P), which is converted into UDP-GlcNAc by the transfer of uridine 5-monophosphate (from uridine 5-triphosphate), a reaction catalyzed by the N-terminal domain. The sequence is that of Bifunctional protein GlmU from Idiomarina loihiensis (strain ATCC BAA-735 / DSM 15497 / L2-TR).